The primary structure comprises 1146 residues: MSGIKKEPIESDEVPQQETKNNLPSAPSEMSPLFLNKNTQKAMQSIAPILEGFSPKTSASENMSLKLPPPGIQDDHSEENLTVHDTLQRTISTALGNGNNTNTVTTSGLKKADSESKSEADPEGLSNSNIVNDADNINSISKTGSPHLPQGTMDAEQTNMGTNSVPTSSASSRKSSTSHPKPRLPKVGKIGVCAMDAKVLSKPMRHILNRLIEHGEFETVIFGDKVILDERIENWPTCDFLISFFSSGFPLDKAIKYVKLRKPFIINDLIMQKILWDRRLCLQVLEAYNVPTPPRLEISRDGGPRANEELRAKLREHGVEVKPVEEPEWKMVDDDTLEVDGKTMTKPFVEKPVDGEDHNIYIYYHSKNGGGGRRLFRKVGNKSSEFDPTLVHPRTEGSYIYEQFMDTDNFEDVKAYTIGENFCHAETRKSPVVDGIVRRNTHGKEVRYITELSDEEKTIAGKVSKAFSQMICGFDLLRVSGKSYVIDVNGFSFVKDNKAYYDSCANILRSTFIEAKKKMDMEKKNLPIIREEKEQKWVFKGLAIIIRHADRTPKQKFKHSFTSPIFISLLKGHKEEVVIRNVNDLKIVLQALRIALDEKAGNPAKIKVLANALEKKLNFPGTKIQLKPVLNKENEVEKVQFILKWGGEPTHSAKYQATELGEQMRQDFDLLNKSILQNIKIFSSSERRVLHTAQYWTRALFGADELGSDEISIRKDLLDDSNAAKDLMDKVKKKLKPLLREGKEAPPQFAWPSKMPEPYLVIKRVVELMNYHKKIMDNNFAKKDVNSMQTRWCTSEDPSLFKERWDKLFKEFNNAEKVDPSKISELYDTMKYDALHNRQFLENIFDPGLPNEAIADELGSHSLVDRYPINVLAKNNFKIIDSHSMNNSGKNSSNSVGSLGWVLESGKTSTARNPKSSSQFDEPRFMQLRELYKLAKVLFDFICPKEYGISDAEKLDIGLLTSLPLAKQILNDIGDMKNRETPACVAYFTKESHIYTLLNIIYESGIPMRIARNALPELDYLSQITFELYESTDASGQKSHSIRLKMSPGCHTQDPLDVQLDDRHYISCIPKISLTKHLDMDYVQQKLRNKFTRVIMPPKFTPVNITSPNLSFQKRKTRRKSVSVEKLKRPASSGSSSSTSVNKTLD.

A disordered region spans residues 1–33 (MSGIKKEPIESDEVPQQETKNNLPSAPSEMSPL). Positions 16-25 (QQETKNNLPS) are enriched in polar residues. Phosphoserine is present on residues Ser31, Ser54, and Ser77. The segment at 93–185 (TALGNGNNTN…STSHPKPRLP (93 aa)) is disordered. Positions 96–106 (GNGNNTNTVTT) are enriched in low complexity. Basic and acidic residues predominate over residues 110–120 (KKADSESKSEA). Positions 125–144 (LSNSNIVNDADNINSISKTG) are enriched in polar residues. The segment covering 164-178 (SVPTSSASSRKSSTS) has biased composition (low complexity). 197–198 (AK) is a substrate binding site. ATP contacts are provided by residues Arg278, Lys351, His358, Arg377, 402 to 405 (EQFM), and 412 to 414 (DVK). 377 to 378 (RK) lines the substrate pocket. Substrate contacts are provided by Lys414 and Arg428. ATP-binding positions include Ser430, Asp475, and 487-489 (DVN). Residue 492-495 (SFVK) coordinates substrate. The polyphosphoinositide-binding domain stretch occupies residues 530-597 (REEKEQKWVF…VLQALRIALD (68 aa)). 2 positions are modified to phosphoserine: Ser895 and Ser1107. The tract at residues 1106-1146 (TSPNLSFQKRKTRRKSVSVEKLKRPASSGSSSSTSVNKTLD) is disordered.

This sequence belongs to the histidine acid phosphatase family. VIP1 subfamily.

It localises to the cytoplasm. The protein resides in the cytoskeleton. The catalysed reaction is 1D-myo-inositol hexakisphosphate + ATP = 1-diphospho-1D-myo-inositol 2,3,4,5,6-pentakisphosphate + ADP. It carries out the reaction 5-diphospho-1D-myo-inositol 1,2,3,4,6-pentakisphosphate + ATP + H(+) = 1,5-bis(diphospho)-1D-myo-inositol 2,3,4,6-tetrakisphosphate + ADP. Functionally, bifunctional inositol kinase that acts in concert with the IP6K kinases to synthesize the diphosphate group-containing inositol pyrophosphates diphosphoinositol pentakisphosphate, PP-InsP5, and bis-diphosphoinositol tetrakisphosphate, (PP)2-InsP4. Phosphorylates inositol hexakisphosphate (InsP6) at position 1 to produce PP-InsP5 which is in turn phosphorylated by IP6Ks to produce (PP)2-InsP4. Alternatively, phosphorylates PP-InsP5 at position 1, produced by IP6Ks from InsP6, to produce (PP)2-InsP4. Required for maintaining cellular integrity, normal growth and interactions with the ARP complex. Acts as a regulator of the PHO80-PHO85 cyclin/cyclin-dependent kinase (CDK) complex, thereby regulating signaling of phosphate availability. Required for the function of the cortical actin cytoskeleton, possibly by participating in correct F-actin localization and ensuring polarized growth. Regulates polarized growth and modulates interphase microtubule cytoskeleton. Regulates microtubule dynamics without the requirement of microtubule plus-end tracking protein Mal3. Required for growth zone selection. This Saccharomyces cerevisiae (strain ATCC 204508 / S288c) (Baker's yeast) protein is Inositol hexakisphosphate and diphosphoinositol-pentakisphosphate kinase.